The chain runs to 334 residues: L-lactate dehydrogenase B chain (334 aa).

A2 carries the N-acetylalanine modification. N6-acetyllysine is present on K7. Residues G30 to K58 and R100 contribute to the NAD(+) site. Residue S44 is modified to Phosphoserine. N6-acetyllysine is present on K58. R107 is a substrate binding site. K119 carries the post-translational modification N6-acetyllysine. N139 serves as a coordination point for NAD(+). Substrate-binding residues include N139 and R170. Catalysis depends on H194, which acts as the Proton acceptor. Y240 is subject to Phosphotyrosine. Residue T249 participates in substrate binding. Position 329 is an N6-acetyllysine (K329).

The protein belongs to the LDH/MDH superfamily. LDH family. In terms of assembly, homotetramer. Interacts with PTEN upstream reading frame protein MP31; the interaction leads to inhibition of mitochondrial lactate dehydrogenase activity, preventing conversion of lactate to pyruvate in mitochondria.

Its subcellular location is the cytoplasm. The protein localises to the mitochondrion inner membrane. The catalysed reaction is (S)-lactate + NAD(+) = pyruvate + NADH + H(+). It participates in fermentation; pyruvate fermentation to lactate; (S)-lactate from pyruvate: step 1/1. Functionally, interconverts simultaneously and stereospecifically pyruvate and lactate with concomitant interconversion of NADH and NAD(+). This Rattus norvegicus (Rat) protein is L-lactate dehydrogenase B chain (Ldhb).